The chain runs to 446 residues: Questin oxidase (446 aa).

This sequence belongs to the questin oxidase family.

It carries out the reaction questin + NADPH + O2 = demethylsulochrin + NADP(+). The protein operates within secondary metabolite biosynthesis. Questin oxidase; part of the gene cluster that mediates the biosynthesis of geodin, an intermediate in the biosynthesis of other natural products. The pathway begins with the synthesis of atrochrysone thioester by the polyketide synthase (PKS) gedC. The atrochrysone carboxyl ACP thioesterase gedB then breaks the thioester bond and releases the atrochrysone carboxylic acid from gedC. The atrochrysone carboxylic acid is then converted to atrochrysone which is further transformed into emodinanthrone. The next step is performed by the emodinanthrone oxygenase gedH that catalyzes the oxidation of emodinanthrone to emodin. Emodin O-methyltransferase encoded probably by gedA then catalyzes methylation of the 8-hydroxy group of emodin to form questin. Ring cleavage of questin by questin oxidase gedK leads to desmethylsulochrin via several intermediates including questin epoxide. Another methylation step probably catalyzed by methyltransferase gedG leads to the formation of sulochrin which is further converted to dihydrogeodin by the sulochrin halogenase gedL. Finally, the dihydrogeodin oxidase gedJ catalyzes the stereospecific phenol oxidative coupling reaction converting dihydrogeodin to geodin. The chain is Questin oxidase from Aspergillus terreus (strain NIH 2624 / FGSC A1156).